A 330-amino-acid polypeptide reads, in one-letter code: MKDTLALLQKFNAHPDSRCWYVAWNPKGTLLASCGGDRAIRIWGREGDSWECKTVLQDGHQRAVRKVAWSPCGNYLASASFDATTCIWKKKNDDFECLTVLEGHENEVKCVAWAPSGNQLATCSRDKSVWIWEVDEEDEYECVSVVNSHTQDVKHVVWHPTQELLASCSYDNNVCVYKEEDDDWECRATLEGHTSTVWGLTFDPSGQRLASCSDDRTVKIWKECQPGGGQDTAWKCVCTLSGFHGRTVYDIAWCPLTGALATACGDDGVRVFKEDETADPDQPVFSLSAHVPKAHSQDVNCIAWHPKEAGLLVSCSDNGEIAVWNYQSEV.

7 WD repeats span residues 14-53 (HPDS…WECK), 59-98 (GHQR…FECL), 103-142 (GHEN…EYEC), 148-187 (SHTQ…WECR), 192-231 (GHTS…GGQD), 243-282 (FHGR…DPDQ), and 294-330 (AHSQ…QSEV).

This sequence belongs to the WD repeat CIA1 family. Component of the CIA complex.

Key component of the cytosolic iron-sulfur protein assembly (CIA) complex, a multiprotein complex that mediates the incorporation of iron-sulfur cluster into extramitochondrial Fe/S proteins. The polypeptide is Probable cytosolic iron-sulfur protein assembly protein ciao1-A (ciao1a) (Salmo salar (Atlantic salmon)).